An 846-amino-acid chain; its full sequence is Selenocysteine insertion sequence-binding protein 2 (846 aa).

2 stretches are compositionally biased toward basic and acidic residues: residues 151–165 (RRAWEEQKSSNRRAD) and 206–215 (PEFEFSRLDF). Disordered regions lie at residues 151–246 (RRAW…SNMS), 266–288 (TDHTDGAVTNNAATSSPSCTREL), 321–440 (TTSS…VPVQ), 448–467 (AALEKQQHAPHAKPSSRPVV), and 475–613 (VLSK…DSAT). Ser-220 is subject to Phosphoserine. 3 stretches are compositionally biased toward polar residues: residues 220-232 (SPKNSNLPETQKQ), 272-288 (AVTNNAATSSPSCTREL), and 321-342 (TTSSADAKNVSVTSEALSSDPS). The Nuclear localization signal motif lies at 370 to 380 (KKNKKKKEKSK). Residues 417–428 (KLQSKQQAQNDF) are compositionally biased toward polar residues. Residues 527–536 (ILKERQERMQ) show a composition bias toward basic and acidic residues. The segment covering 542 to 551 (SAVSPTVASD) has biased composition (polar residues). The interval 666–687 (LVLGLREVLKHLKLRKLKCIII) is RNA-binding. The disordered stretch occupies residues 774–804 (RQEQAGEPGPQTPPSPPMQDPIQSTDEGTLA). The segment covering 783 to 792 (PQTPPSPPMQ) has biased composition (pro residues).

As to expression, ubiquitous.

The protein resides in the cytoplasm. It is found in the nucleus. Its function is as follows. mRNA-binding protein that binds to the SECIS (selenocysteine insertion sequence) element present in the 3'-UTR of mRNAs encoding selenoproteins and facilitates the incorporation of the rare amino acid selenocysteine. Insertion of selenocysteine at UGA codons is mediated by SECISBP2 and EEFSEC: SECISBP2 (1) specifically binds the SECIS sequence once the 80S ribosome encounters an in-frame UGA codon and (2) contacts the RPS27A/eS31 of the 40S ribosome before ribosome stalling. (3) GTP-bound EEFSEC then delivers selenocysteinyl-tRNA(Sec) to the 80S ribosome and adopts a preaccommodated state conformation. (4) After GTP hydrolysis, EEFSEC dissociates from the assembly, selenocysteinyl-tRNA(Sec) accommodates, and peptide bond synthesis and selenoprotein elongation occur. The protein is Selenocysteine insertion sequence-binding protein 2 (Secisbp2) of Rattus norvegicus (Rat).